We begin with the raw amino-acid sequence, 286 residues long: 4-diphosphocytidyl-2-C-methyl-D-erythritol kinase (286 aa).

K12 is a catalytic residue. 96-106 is an ATP binding site; the sequence is PHGAGLGGGSA. Residue D138 is part of the active site.

It belongs to the GHMP kinase family. IspE subfamily.

The catalysed reaction is 4-CDP-2-C-methyl-D-erythritol + ATP = 4-CDP-2-C-methyl-D-erythritol 2-phosphate + ADP + H(+). It participates in isoprenoid biosynthesis; isopentenyl diphosphate biosynthesis via DXP pathway; isopentenyl diphosphate from 1-deoxy-D-xylulose 5-phosphate: step 3/6. Catalyzes the phosphorylation of the position 2 hydroxy group of 4-diphosphocytidyl-2C-methyl-D-erythritol. This is 4-diphosphocytidyl-2-C-methyl-D-erythritol kinase from Nitratidesulfovibrio vulgaris (strain ATCC 29579 / DSM 644 / CCUG 34227 / NCIMB 8303 / VKM B-1760 / Hildenborough) (Desulfovibrio vulgaris).